Consider the following 749-residue polypeptide: EF-hand domain-containing family member C2 (749 aa).

DM10 domains lie at 75 to 182 (DKQV…RKIG), 226 to 368 (HGKI…KSKY), and 431 to 538 (KSNI…EQNT). An EF-hand domain is found at 558–593 (GKSRELKQVFKAADSKHTNMVDYNTFRDILMSLTVG).

In terms of assembly, microtubule inner protein component of sperm flagellar doublet microtubules. In terms of tissue distribution, expressed in airway epithelial cells.

The protein localises to the cytoplasm. Its subcellular location is the cytoskeleton. It is found in the cilium axoneme. The protein resides in the flagellum axoneme. Its function is as follows. Microtubule inner protein (MIP) part of the dynein-decorated doublet microtubules (DMTs) in cilia axoneme, which is required for motile cilia beating. The sequence is that of EF-hand domain-containing family member C2 from Homo sapiens (Human).